The following is a 50-amino-acid chain: Ribosome-inactivating protein lyophyllin (50 aa).

It carries out the reaction Endohydrolysis of the N-glycosidic bond at one specific adenosine on the 28S rRNA.. N-glycosylase that inhibits protein synthesis by depurinating ribosomal rRNA, and thus acts as a ribosomal inactivating protein (RIP). Has adenine polynucleotide glycosidase activity on the poly(A) substrate A30-ssDNA. Inhibits cell-free translation in rabbit reticulocyte lysate system with an IC(50) of 1 nM. May function in the defense response to pathogens. Displays antifungal activity against C.comatus and P.piricola, but not against R.solani, M.arachidicola and C.gossypii. Inhibits mycelial growth in P.piricola with an IC(50) of 2.5 uM. Has cytotoxic activity against the human cancer cell lines Hela, HepG2, and JAR, with IC(50) of 358.8, 489.8, and 926.9 nM respectively. It also inhibits HIV-1 reverse transcriptase activity (IC(50)=7.9 nM) and disrupts mouse embryonic development. This is Ribosome-inactivating protein lyophyllin from Lyophyllum shimeji (Hon-shimeji).